The following is a 246-amino-acid chain: E3 ubiquitin-protein ligase MARCHF2 (246 aa).

The segment at 56-116 (DSQSDCPFCR…ELCHTEFAVE (61 aa)) adopts an RING-CH-type zinc-finger fold. Zn(2+) is bound by residues cysteine 64, cysteine 67, cysteine 80, cysteine 82, histidine 90, cysteine 93, cysteine 106, and cysteine 109. Residues 121–246 (PLTEWLKDPG…LKKVAEETPV (126 aa)) are required for interaction with IKBKG. Transmembrane regions (helical) follow at residues 138-158 (LCCD…SGWL) and 175-195 (AVGL…WTLV).

Interacts with STX6; the interaction promotes MARCHF2-mediated ubiquitination and degradation of CFTR. Interacts with MARCHF3. Interacts with GOPC/CAL; the interaction leads to CFTR ubiquitination and degradation. Interacts with CFTR; the interaction leads to CFTR ubiqtuitination and degradation. Interacts (via PDZ domain) with DLG1 (via PDZ domains); the interaction leads to DLG1 ubiqtuitination and degradation. Interacts with ERGIC3. Interacts with ADRB2. Interacts with IKBKG/NEMO; during the late stages of macrophage viral and bacterial infection; the interaction leads to ubiquitination and degradation of IKBKG/NEMO.

The protein localises to the endoplasmic reticulum membrane. The protein resides in the lysosome membrane. It is found in the endosome membrane. Its subcellular location is the golgi apparatus membrane. It localises to the cytoplasm. The protein localises to the cell membrane. It catalyses the reaction S-ubiquitinyl-[E2 ubiquitin-conjugating enzyme]-L-cysteine + [acceptor protein]-L-lysine = [E2 ubiquitin-conjugating enzyme]-L-cysteine + N(6)-ubiquitinyl-[acceptor protein]-L-lysine.. Its pathway is protein modification; protein ubiquitination. Its function is as follows. E3 ubiquitin-protein ligase that may mediate ubiquitination of TFRC and CD86, and promote their subsequent endocytosis and sorting to lysosomes via multivesicular bodies. E3 ubiquitin ligases accept ubiquitin from an E2 ubiquitin-conjugating enzyme in the form of a thioester and then directly transfer the ubiquitin to targeted substrates. Together with GOPC/CAL mediates the ubiquitination and lysosomal degradation of CFTR. Ubiquitinates and therefore mediates the degradation of DLG1. Regulates the intracellular trafficking and secretion of alpha1-antitrypsin/SERPINA1 and HP/haptoglobin via ubiquitination and degradation of the cargo receptor ERGIC3. Negatively regulates the antiviral and antibacterial immune response by repression of the NF-kB and type 1 IFN signaling pathways, via MARCHF2-mediated K48-linked polyubiquitination of IKBKG/NEMO, resulting in its proteasomal degradation. May be involved in endosomal trafficking through interaction with STX6. The sequence is that of E3 ubiquitin-protein ligase MARCHF2 (Marchf2) from Mus musculus (Mouse).